The sequence spans 3214 residues: Ciliogenesis and planar polarity effector 1 (3214 aa).

Transmembrane regions (helical) follow at residues 593–613 (KLML…LQFI) and 632–652 (AWVL…YWDM). Disordered regions lie at residues 1496–1523 (VGKK…ETPG), 1644–1667 (GNQS…PLQS), 1879–1991 (DGRH…HRAQ), 2047–2142 (FGES…FPPA), 2214–2241 (SLSD…SSHC), 2398–2440 (GITQ…ISND), 2491–2529 (GSHD…GHEP), 2622–2650 (TFQS…QSGE), 2824–2855 (VSLQ…HSSQ), 3037–3127 (TAPA…CRED), and 3158–3181 (MSPA…VSES). Residues 1512-1523 (NSQRKEDDETPG) show a composition bias toward basic and acidic residues. Over residues 1932–1942 (QCSRKEPRDAS) the composition is skewed to basic and acidic residues. Polar residues-rich tracts occupy residues 1943–1953 (VDTNLTEQKGA), 1971–1984 (NGAQ…QKTQ), and 2047–2068 (FGES…SRQR). The span at 2079–2099 (CTREPGKNSPADHKRISRPDQ) shows a compositional bias: basic and acidic residues. Residues 2215-2241 (LSDSCQPPVSQRTVHTTLPSPSDSSHC) show a composition bias toward polar residues. Residues 2500–2514 (DPDKEGPSQKADSES) show a composition bias toward basic and acidic residues. Polar residues-rich tracts occupy residues 2515 to 2524 (SKNPQATAAS) and 2622 to 2634 (TFQS…STRG). Residues 2830–2848 (EDVEEQKDAEETSETEFSE) are compositionally biased toward acidic residues. Over residues 3090–3107 (RGSSQLRGSQPPCQSQKP) the composition is skewed to polar residues.

In terms of assembly, interacts with FUZ; INTU and WDPCP; the interactors are proposed to form the core CPLANE (ciliogenesis and planar polarity effectors) complex.

The protein localises to the membrane. It localises to the cell projection. The protein resides in the cilium. Involved in ciliogenesis. Involved in the establishment of cell polarity required for directional cell migration. Proposed to act in association with the CPLANE (ciliogenesis and planar polarity effectors) complex. Involved in recruitment of peripheral IFT-A proteins to basal bodies. The protein is Ciliogenesis and planar polarity effector 1 of Mus musculus (Mouse).